Consider the following 814-residue polypeptide: S-layer protein sap (814 aa).

The first 29 residues, 1 to 29 (MAKTNSYKKVIAGTMTAAMVAGVVSPVAA), serve as a signal peptide directing secretion. SLH domains lie at 30–93 (AGKT…DAKP), 94–150 (SFAD…KVNG), and 152–214 (PATK…AAKV). The BIG2 domain maps to 403-479 (FTSKDFKQNN…TVKDSKGKEL (77 aa)).

In terms of processing, probably glycosylated.

Its subcellular location is the secreted. It localises to the cell wall. The protein resides in the S-layer. Functionally, the S-layer is a paracrystalline mono-layered assembly of proteins which coat the surface of bacteria. The sequence is that of S-layer protein sap (sap) from Bacillus anthracis.